Here is a 52-residue protein sequence, read N- to C-terminus: Insulin (52 aa).

Cystine bridges form between cysteine 9–cysteine 38, cysteine 21–cysteine 51, and cysteine 37–cysteine 42.

Belongs to the insulin family. In terms of assembly, heterodimer of a B chain and an A chain linked by two disulfide bonds.

Its subcellular location is the secreted. Functionally, insulin decreases blood glucose concentration. It increases cell permeability to monosaccharides, amino acids and fatty acids. It accelerates glycolysis, the pentose phosphate cycle, and glycogen synthesis in liver. The polypeptide is Insulin (ins) (Piaractus mesopotamicus (Small-scaled pacu)).